The following is a 557-amino-acid chain: Iron-sulfur cluster assembly SufBD family protein ABCI8, chloroplastic (557 aa).

Residues 1–47 (MASLLANGISSFSPQPTSDSSKSPKGFHPKPESLKFPSPKSLNPTRP) are disordered. The N-terminal 52 residues, 1-52 (MASLLANGISSFSPQPTSDSSKSPKGFHPKPESLKFPSPKSLNPTRPIFKLR), are a transit peptide targeting the chloroplast. Residues 10–24 (SSFSPQPTSDSSKSP) are compositionally biased toward low complexity.

Belongs to the iron-sulfur cluster assembly SufBD family.

It localises to the plastid. The protein localises to the chloroplast. In terms of biological role, involved in light signaling, probably by mediating the transport and correct distribution of protoporphyrin IX, a chlorophyll precursor, in response to far-red light. This chain is Iron-sulfur cluster assembly SufBD family protein ABCI8, chloroplastic (ABCI8), found in Arabidopsis thaliana (Mouse-ear cress).